Reading from the N-terminus, the 875-residue chain is Lysine-specific demethylase JMJ26 (875 aa).

Residues 31–103 (KPVEATSLSS…RSSVKKRATT (73 aa)) form a disordered region. Residues 62–69 (RKRSKADE) carry the Nuclear localization signal motif. Positions 79 to 93 (KCDDENKCEENEKKQ) are enriched in basic and acidic residues. 12 residues coordinate Zn(2+): C193, C196, C207, C210, C216, C219, C236, C239, C322, C325, C339, and C347. Residues 193-240 (CHQCSKGERRYLFICTFCEVRLYCFPCIKKWYPHLSTDDILEKCPFCR) form an RING-type; degenerate zinc finger. The B box-type; degenerate zinc-finger motif lies at 317-347 (EERVFCNHCATSIVDLHRSCPKCSYELCLNC). The JmjC domain maps to 614-837 (PRSGILNIAT…ECLRLTDEFR (224 aa)). Residues H658, D660, and H805 each contribute to the Fe cation site.

This sequence belongs to the JARID1 histone demethylase family. Fe(2+) is required as a cofactor. As to expression, expressed in inflorescences, roots, siliques, leaves and stems.

The protein localises to the nucleus. In terms of biological role, may function as histone H3 lysine demethylase and be involved in regulation of gene expression. The protein is Lysine-specific demethylase JMJ26 of Arabidopsis thaliana (Mouse-ear cress).